Consider the following 392-residue polypeptide: WD repeat-containing protein GTS1 (392 aa).

WD repeat units follow at residues 81-124 (GHSD…QVSR), 128-167 (GNDQEIFSFSYGGAADNLLAGGCKEQVLLWDWRNSKQVAC), 171-211 (SHMD…NDDD), and 323-368 (GHID…TEIN).

As to expression, expressed in germinating seeds, rosettes leaves, flowers and siliques.

Functionally, involved in the control of plant growth development. Acts as negative regulator of seed germination, cell division in meristematic regions, plant growth and overall biomass accumulation. May function by regulating ribosome activities and biogenesis in plant cells. The sequence is that of WD repeat-containing protein GTS1 from Arabidopsis thaliana (Mouse-ear cress).